The primary structure comprises 119 residues: NAD(P)H-quinone oxidoreductase subunit M (119 aa).

It belongs to the complex I NdhM subunit family. In terms of assembly, NDH-1 can be composed of about 15 different subunits; different subcomplexes with different compositions have been identified which probably have different functions.

It localises to the cellular thylakoid membrane. It carries out the reaction a plastoquinone + NADH + (n+1) H(+)(in) = a plastoquinol + NAD(+) + n H(+)(out). The enzyme catalyses a plastoquinone + NADPH + (n+1) H(+)(in) = a plastoquinol + NADP(+) + n H(+)(out). In terms of biological role, NDH-1 shuttles electrons from an unknown electron donor, via FMN and iron-sulfur (Fe-S) centers, to quinones in the respiratory and/or the photosynthetic chain. The immediate electron acceptor for the enzyme in this species is believed to be plastoquinone. Couples the redox reaction to proton translocation, and thus conserves the redox energy in a proton gradient. Cyanobacterial NDH-1 also plays a role in inorganic carbon-concentration. This chain is NAD(P)H-quinone oxidoreductase subunit M, found in Picosynechococcus sp. (strain ATCC 27264 / PCC 7002 / PR-6) (Agmenellum quadruplicatum).